Here is a 252-residue protein sequence, read N- to C-terminus: Cell division protein ZapD (252 aa).

This sequence belongs to the ZapD family. Interacts with FtsZ.

Its subcellular location is the cytoplasm. Cell division factor that enhances FtsZ-ring assembly. Directly interacts with FtsZ and promotes bundling of FtsZ protofilaments, with a reduction in FtsZ GTPase activity. The protein is Cell division protein ZapD of Cupriavidus pinatubonensis (strain JMP 134 / LMG 1197) (Cupriavidus necator (strain JMP 134)).